A 186-amino-acid chain; its full sequence is Translation initiation factor IF-3 (186 aa).

A disordered region spans residues 1 to 21 (MINRSSGKDRDRSRSGDKELR).

Belongs to the IF-3 family. Monomer.

Its subcellular location is the cytoplasm. In terms of biological role, IF-3 binds to the 30S ribosomal subunit and shifts the equilibrium between 70S ribosomes and their 50S and 30S subunits in favor of the free subunits, thus enhancing the availability of 30S subunits on which protein synthesis initiation begins. This chain is Translation initiation factor IF-3, found in Borrelia turicatae (strain 91E135).